Here is a 188-residue protein sequence, read N- to C-terminus: Putative 3-methyladenine DNA glycosylase (188 aa).

It belongs to the DNA glycosylase MPG family.

The sequence is that of Putative 3-methyladenine DNA glycosylase from Ehrlichia ruminantium (strain Welgevonden).